Reading from the N-terminus, the 171-residue chain is Small ribosomal subunit protein mS25 (171 aa).

It belongs to the mitochondrion-specific ribosomal protein mS25 family. As to quaternary structure, component of the mitochondrial ribosome small subunit (28S) which comprises a 12S rRNA and about 30 distinct proteins.

It is found in the mitochondrion. This is Small ribosomal subunit protein mS25 (Mrps25) from Rattus norvegicus (Rat).